The chain runs to 342 residues: GTPase Obg (342 aa).

In terms of domain architecture, Obg spans 1–159 (MKFLDLCKVY…RTIWLRLKLI (159 aa)). In terms of domain architecture, OBG-type G spans 160–327 (ADAGLLGLPN…VLRALWAEID (168 aa)). Residues 166–173 (GLPNAGKS), 191–195 (FTTLV), 212–215 (DIPG), 279–282 (NKID), and 308–310 (SGV) contribute to the GTP site. Serine 173 and threonine 193 together coordinate Mg(2+).

It belongs to the TRAFAC class OBG-HflX-like GTPase superfamily. OBG GTPase family. As to quaternary structure, monomer. Requires Mg(2+) as cofactor.

It is found in the cytoplasm. An essential GTPase which binds GTP, GDP and possibly (p)ppGpp with moderate affinity, with high nucleotide exchange rates and a fairly low GTP hydrolysis rate. Plays a role in control of the cell cycle, stress response, ribosome biogenesis and in those bacteria that undergo differentiation, in morphogenesis control. The chain is GTPase Obg from Cereibacter sphaeroides (strain ATCC 17025 / ATH 2.4.3) (Rhodobacter sphaeroides).